The chain runs to 616 residues: Sulfite reductase [NADPH] hemoprotein beta-component (616 aa).

A compositionally biased stretch (basic and acidic residues) spans 1 to 10 (MDDHSPRDAA). A disordered region spans residues 1–35 (MDDHSPRDAAETPAPGPAATPAKRVYETPPTSRPI). The segment covering 11-22 (ETPAPGPAATPA) has biased composition (low complexity). Positions 470, 476, 515, and 519 each coordinate [4Fe-4S] cluster. Cys-519 lines the siroheme pocket.

The protein belongs to the nitrite and sulfite reductase 4Fe-4S domain family. As to quaternary structure, alpha(8)-beta(8). The alpha component is a flavoprotein, the beta component is a hemoprotein. Siroheme is required as a cofactor. [4Fe-4S] cluster serves as cofactor.

It carries out the reaction hydrogen sulfide + 3 NADP(+) + 3 H2O = sulfite + 3 NADPH + 4 H(+). It functions in the pathway sulfur metabolism; hydrogen sulfide biosynthesis; hydrogen sulfide from sulfite (NADPH route): step 1/1. Functionally, component of the sulfite reductase complex that catalyzes the 6-electron reduction of sulfite to sulfide. This is one of several activities required for the biosynthesis of L-cysteine from sulfate. This is Sulfite reductase [NADPH] hemoprotein beta-component from Methylobacterium radiotolerans (strain ATCC 27329 / DSM 1819 / JCM 2831 / NBRC 15690 / NCIMB 10815 / 0-1).